A 124-amino-acid polypeptide reads, in one-letter code: Small ribosomal subunit protein uS12 (124 aa).

Asp-89 bears the 3-methylthioaspartic acid mark.

The protein belongs to the universal ribosomal protein uS12 family. In terms of assembly, part of the 30S ribosomal subunit. Contacts proteins S8 and S17. May interact with IF1 in the 30S initiation complex.

Functionally, with S4 and S5 plays an important role in translational accuracy. Its function is as follows. Interacts with and stabilizes bases of the 16S rRNA that are involved in tRNA selection in the A site and with the mRNA backbone. Located at the interface of the 30S and 50S subunits, it traverses the body of the 30S subunit contacting proteins on the other side and probably holding the rRNA structure together. The combined cluster of proteins S8, S12 and S17 appears to hold together the shoulder and platform of the 30S subunit. The sequence is that of Small ribosomal subunit protein uS12 from Histophilus somni (strain 129Pt) (Haemophilus somnus).